We begin with the raw amino-acid sequence, 249 residues long: uncharacterized protein (249 aa).

This is an uncharacterized protein from Methanocaldococcus jannaschii (strain ATCC 43067 / DSM 2661 / JAL-1 / JCM 10045 / NBRC 100440) (Methanococcus jannaschii).